Here is a 132-residue protein sequence, read N- to C-terminus: Ribonuclease P protein component 2 (132 aa).

This sequence belongs to the eukaryotic/archaeal RNase P protein component 2 family. As to quaternary structure, consists of a catalytic RNA component and at least 4-5 protein subunits.

It is found in the cytoplasm. The enzyme catalyses Endonucleolytic cleavage of RNA, removing 5'-extranucleotides from tRNA precursor.. Its function is as follows. Part of ribonuclease P, a protein complex that generates mature tRNA molecules by cleaving their 5'-ends. The chain is Ribonuclease P protein component 2 from Methanosarcina acetivorans (strain ATCC 35395 / DSM 2834 / JCM 12185 / C2A).